Consider the following 314-residue polypeptide: Glycine--tRNA ligase alpha subunit (314 aa).

This sequence belongs to the class-II aminoacyl-tRNA synthetase family. As to quaternary structure, tetramer of two alpha and two beta subunits.

It is found in the cytoplasm. It catalyses the reaction tRNA(Gly) + glycine + ATP = glycyl-tRNA(Gly) + AMP + diphosphate. In Mesorhizobium japonicum (strain LMG 29417 / CECT 9101 / MAFF 303099) (Mesorhizobium loti (strain MAFF 303099)), this protein is Glycine--tRNA ligase alpha subunit.